Here is a 140-residue protein sequence, read N- to C-terminus: Putative pre-16S rRNA nuclease (140 aa).

Belongs to the YqgF nuclease family.

Its subcellular location is the cytoplasm. Its function is as follows. Could be a nuclease involved in processing of the 5'-end of pre-16S rRNA. The protein is Putative pre-16S rRNA nuclease of Aeromonas salmonicida (strain A449).